A 162-amino-acid chain; its full sequence is Peptidyl-prolyl cis-trans isomerase (162 aa).

The PPIase cyclophilin-type domain occupies 16 to 162 (KTAYATIKTN…IESVVFSPSL (147 aa)).

It belongs to the cyclophilin-type PPIase family.

It catalyses the reaction [protein]-peptidylproline (omega=180) = [protein]-peptidylproline (omega=0). In terms of biological role, PPIases accelerate the folding of proteins. It catalyzes the cis-trans isomerization of proline imidic peptide bonds in oligopeptides. The chain is Peptidyl-prolyl cis-trans isomerase (ppiA) from Helicobacter pylori (strain J99 / ATCC 700824) (Campylobacter pylori J99).